The primary structure comprises 331 residues: Calcium-binding and coiled-coil domain-containing protein 2 (331 aa).

Positions 128–131 (IMVV) match the CLIR motif. The stretch at 132 to 309 (INKEKVEEME…EKASWEKEKA (178 aa)) forms a coiled coil. The tract at residues 189–310 (KASWEKEKAS…KASWEKEKAP (122 aa)) is disordered. The short motif at 190–193 (ASWE) is the LIR-like element. Positions 292-302 (KEKASWEEEKA) are interaction with LGALS8.

The protein belongs to the CALCOCO family. Dimer. Part of a complex consisting of CALCOCO2, TAX1BP1 and MYO6. Interacts with MYO6. Interacts with GEMIN4. Interacts with ATG8 family members MAP1LC3A, MAP1LC3B, GABARAP, GABARAPL1 and GABARAPL2. Interacts with ATG8 family member MAP1LC3C. Interacts with LGALS8. Interacts with TOM1; the interaction is indirect and is mediated by MYO6, which acts as a bridge between TOM1 and CALCOCO2. Interacts with AZI2.

It is found in the cytoplasm. The protein resides in the perinuclear region. It localises to the cytoskeleton. Its subcellular location is the cytoplasmic vesicle. The protein localises to the autophagosome membrane. Functionally, xenophagy-specific receptor required for autophagy-mediated intracellular bacteria degradation. Acts as an effector protein of galectin-sensed membrane damage that restricts the proliferation of infecting pathogens upon entry into the cytosol by targeting LGALS8-associated bacteria for autophagy. Initially orchestrates bacteria targeting to autophagosomes and subsequently ensures pathogen degradation by regulating pathogen-containing autophagosome maturation. Bacteria targeting to autophagosomes relies on its interaction with MAP1LC3A, MAP1LC3B and/or GABARAPL2, whereas regulation of pathogen-containing autophagosome maturation requires the interaction with MAP3LC3C. May play a role in ruffle formation and actin cytoskeleton organization and seems to negatively regulate constitutive secretion. The sequence is that of Calcium-binding and coiled-coil domain-containing protein 2 from Mus musculus (Mouse).